The following is a 178-amino-acid chain: MAHEILDGSSMQRALTRITYEIIEQNKGVDNLVFVGIKTRGVYLAKRLAKRLNQLENVEIPVAPLDVSLYRDDRHVPDHTQEPTVKTDQLDIDITNKHVILVDDVLFTGRTVRAALDALMDMGRPTRISLAVLVDRGHRELPIRPDFVGKNIPTAMNETVHVAVEEYDGHEDVTIEHN.

The PRPP-binding signature appears at 99–111 (VILVDDVLFTGRT).

Belongs to the purine/pyrimidine phosphoribosyltransferase family. PyrR subfamily. In terms of assembly, homodimer and homohexamer; in equilibrium.

The catalysed reaction is UMP + diphosphate = 5-phospho-alpha-D-ribose 1-diphosphate + uracil. Its function is as follows. Regulates transcriptional attenuation of the pyrimidine nucleotide (pyr) operon by binding in a uridine-dependent manner to specific sites on pyr mRNA. This disrupts an antiterminator hairpin in the RNA and favors formation of a downstream transcription terminator, leading to a reduced expression of downstream genes. Functionally, also displays a weak uracil phosphoribosyltransferase activity which is not physiologically significant. This Limosilactobacillus reuteri subsp. reuteri (strain JCM 1112) (Lactobacillus reuteri) protein is Bifunctional protein PyrR.